The sequence spans 639 residues: Kinesin-like protein KIF22 (639 aa).

The region spanning 18–345 (RVRVAVRLRP…LNFAAKSKQI (328 aa)) is the Kinesin motor domain. 102–109 (GPTGAGKT) contributes to the ATP binding site. Residues 358–400 (IAALPAMKRPREEAETAAGSRQRKKSKTDSTESSPNTSMDAAS) form a disordered region. Polar residues predominate over residues 388 to 397 (TESSPNTSMD). The stretch at 439-484 (KRERMALLKKWEESQMEIERLKEKQKELEQKAIEAEARLEKSTNSD) forms a coiled coil. An Important for regulated proteolytic degradation motif is present at residues 549 to 552 (GREN).

This sequence belongs to the TRAFAC class myosin-kinesin ATPase superfamily. Kinesin family. Post-translationally, ubiquitinated, leading to its subsequent proteasomal degradation.

It is found in the nucleus. It localises to the cytoplasm. The protein resides in the cytoskeleton. Functionally, kinesin family member that is involved in spindle formation and the movements of chromosomes during mitosis and meiosis. Binds to microtubules and to DNA. The protein is Kinesin-like protein KIF22 (kif22) of Xenopus tropicalis (Western clawed frog).